A 350-amino-acid chain; its full sequence is Phosphate acyltransferase (350 aa).

The protein belongs to the PlsX family. As to quaternary structure, homodimer. Probably interacts with PlsY.

Its subcellular location is the cytoplasm. The catalysed reaction is a fatty acyl-[ACP] + phosphate = an acyl phosphate + holo-[ACP]. Its pathway is lipid metabolism; phospholipid metabolism. Functionally, catalyzes the reversible formation of acyl-phosphate (acyl-PO(4)) from acyl-[acyl-carrier-protein] (acyl-ACP). This enzyme utilizes acyl-ACP as fatty acyl donor, but not acyl-CoA. The protein is Phosphate acyltransferase of Phenylobacterium zucineum (strain HLK1).